Reading from the N-terminus, the 464-residue chain is Protein FAM90A16 (464 aa).

Disordered stretches follow at residues 1 to 42 (MMAR…DPRL), 70 to 389 (PATL…HDGA), and 415 to 437 (HSPEKPGAFLAQSPHVSEKSEAP). 2 stretches are compositionally biased toward basic and acidic residues: residues 74–89 (GKKEGKENLKPWKPRV) and 97–114 (NKDKGEKEERPRQQDPQR). Residues 180 to 197 (LASLSPLRKASLSSSSSL) show a composition bias toward low complexity.

This sequence belongs to the FAM90 family.

This chain is Protein FAM90A16, found in Homo sapiens (Human).